A 619-amino-acid chain; its full sequence is Very-long-chain aldehyde decarbonylase GL1-4 (619 aa).

The next 5 helical transmembrane spans lie at 45–65 (IAFSLILPSLLLRMIHNQIWI), 94–114 (GWDDQILFNGLVFYAGYLAMP), 126–146 (GAVVTALVHTGPVEFLYYWFH), 178–198 (FAEHVVYFILFAIPILSTIYL), and 325–345 (AWYMWTLWPLAWLSMVLAWIY). Positions 138–272 (VEFLYYWFHR…MPFYDYIYNT (135 aa)) constitute a Fatty acid hydroxylase domain.

This sequence belongs to the sterol desaturase family. As to quaternary structure, homodimer.

The protein localises to the endoplasmic reticulum membrane. It carries out the reaction a long-chain fatty aldehyde + 2 NADPH + O2 + H(+) = a long-chain alkane + formate + 2 NADP(+) + H2O. Its function is as follows. Aldehyde decarbonylase involved in the conversion of aldehydes to alkanes. Core component of a very-long-chain alkane synthesis complex. This chain is Very-long-chain aldehyde decarbonylase GL1-4, found in Oryza sativa subsp. indica (Rice).